Consider the following 340-residue polypeptide: UDP-3-O-acylglucosamine N-acyltransferase (340 aa).

H247 acts as the Proton acceptor in catalysis.

The protein belongs to the transferase hexapeptide repeat family. LpxD subfamily. Homotrimer.

It catalyses the reaction a UDP-3-O-[(3R)-3-hydroxyacyl]-alpha-D-glucosamine + a (3R)-hydroxyacyl-[ACP] = a UDP-2-N,3-O-bis[(3R)-3-hydroxyacyl]-alpha-D-glucosamine + holo-[ACP] + H(+). Its pathway is bacterial outer membrane biogenesis; LPS lipid A biosynthesis. Functionally, catalyzes the N-acylation of UDP-3-O-acylglucosamine using 3-hydroxyacyl-ACP as the acyl donor. Is involved in the biosynthesis of lipid A, a phosphorylated glycolipid that anchors the lipopolysaccharide to the outer membrane of the cell. This Caulobacter sp. (strain K31) protein is UDP-3-O-acylglucosamine N-acyltransferase.